A 229-amino-acid chain; its full sequence is Cytochrome c oxidase subunit 2 (229 aa).

At methionine 1–histidine 26 the chain is on the mitochondrial intermembrane side. A helical membrane pass occupies residues alanine 27 to asparagine 48. The Mitochondrial matrix segment spans residues serine 49–glutamate 62. Residues methionine 63–arginine 82 traverse the membrane as a helical segment. The Mitochondrial intermembrane portion of the chain corresponds to leucine 83–serine 229. Residues histidine 161, cysteine 196, glutamate 198, cysteine 200, histidine 204, and methionine 207 each contribute to the Cu cation site. Glutamate 198 lines the Mg(2+) pocket.

It belongs to the cytochrome c oxidase subunit 2 family. As to quaternary structure, component of the cytochrome c oxidase (complex IV, CIV), a multisubunit enzyme composed of a catalytic core of 3 subunits and several supernumerary subunits. The complex exists as a monomer or a dimer and forms supercomplexes (SCs) in the inner mitochondrial membrane with ubiquinol-cytochrome c oxidoreductase (cytochrome b-c1 complex, complex III, CIII). It depends on Cu cation as a cofactor.

The protein resides in the mitochondrion inner membrane. The enzyme catalyses 4 Fe(II)-[cytochrome c] + O2 + 8 H(+)(in) = 4 Fe(III)-[cytochrome c] + 2 H2O + 4 H(+)(out). Functionally, component of the cytochrome c oxidase, the last enzyme in the mitochondrial electron transport chain which drives oxidative phosphorylation. The respiratory chain contains 3 multisubunit complexes succinate dehydrogenase (complex II, CII), ubiquinol-cytochrome c oxidoreductase (cytochrome b-c1 complex, complex III, CIII) and cytochrome c oxidase (complex IV, CIV), that cooperate to transfer electrons derived from NADH and succinate to molecular oxygen, creating an electrochemical gradient over the inner membrane that drives transmembrane transport and the ATP synthase. Cytochrome c oxidase is the component of the respiratory chain that catalyzes the reduction of oxygen to water. Electrons originating from reduced cytochrome c in the intermembrane space (IMS) are transferred via the dinuclear copper A center (CU(A)) of subunit 2 and heme A of subunit 1 to the active site in subunit 1, a binuclear center (BNC) formed by heme A3 and copper B (CU(B)). The BNC reduces molecular oxygen to 2 water molecules using 4 electrons from cytochrome c in the IMS and 4 protons from the mitochondrial matrix. The polypeptide is Cytochrome c oxidase subunit 2 (mt:CoII) (Drosophila miranda (Fruit fly)).